The chain runs to 1351 residues: SLVRMRREGEEDLTLEEKAELCSELELQQKYVDIGSNIIGDLSSLPIVGKIVGTIAAAAMAVTHVASGRLDIEQTLGGCSDVPFDQIKEILEERFNEIDRKLESHSAALEEITKLVEKSISAVEKTRKQMNKRFDEVMRSIQDAKVSPLVSKINNFARYFDTEKERIRGLKLSDYILKLEEPNGILLHFKESRTPRDDSLQAPLFSIIQERYAVPKSIDDELAFKVLYALLYGTQTYVSVMFFLLEQYSFLANHYYEKGDLEKYDEYFNSLNNVFLDFKSSLVGTGTSNNEGLLDRVLQVLVTVKNSEFLGLEKNGVNEMLNEKINLFNKIKVEIEGKQRMTLSETPENFAQISFDKDITTPIGDWRDGREVRYAVQYASETLFSKISHWSDPVGVREKACPTLRMPVDQTRRNILVFRKFDSSKPQLVGEITPYQSNFIDIDRDLYNTANNPDSAVGFKEFTKLNYDGANIRATFEQGRTVFHAAAKSGNSRIMIGLTFLVKSNELNQPDKKGYTPIHVAADSGNAGIVNLLIQRGVSINSKTYNFLQTPLHLAAQRGFVTTFQRLMESPEININERDKDGFTPLHYAVRGGERILEAFINQIRIDLNAKSNKGLTPFHLAIIKDDWPVASTLLGSKKVDVNAVDENNMTALHYAAILGYLETTKQLINLKEINADVVSSPGLLSALHYAILYKHDDVASFLLRSSNVNVNLKALGGITPLHLAVIQGRTQILSLMFDIGVNIEQQTDEKYTPLHLAAMSKYPELIQILLDQGSNFEAKTNSGATPLHLATFKGKSKAALILLNNEVNWRDTDENGQMPIHGAAMNGLLDVAQAIISIDATVLDIKDKNSDTPLNLAAQKSHIDVIKYFIDQGADINTRNKTGHAPLLAFSKKGNLDMVKYLFDKNANVYIADNDGINFFYYAVRNGHLNIVKYAMSEKDKFEWSNIDNNRRDECPKEECAISHFAVCDAVQFDKIEIVKYFVTTLGNFAICGPLHQAARYGHLDIEKYLVEEEDLNVDGSKPDTPLCYASENGHLAVVQYLVSNGAKVNHDCGNGMTAIDKAITKNHLQVVQFLAANGVDFRRKNKLGATPFLTAVSENAFDIAEYLIRENRQDIDINEQNVDKETALHLAVYYKNLQMIKLLVKYGIDMTIRNAYDKTALDIATDLKNSNIVEYLKTKSGKFRREYKSSYGEHSLLQTNKISSFIDGKNIEHDHPQFINADNESSQLFSDTASNIDVIGPLLLIDVLIRYFSKQGYISKESDSASDGITQAAALSITEKFEDVLNSLHNESAKEQVDLAEVHGKVYAALKSGRNSQIHPILCSSLKSISTLKPEDMEKLGSVIMNSHS.

The first 7 residues, 1-7, serve as a signal peptide directing secretion; the sequence is SLVRMRR. Positions 4–7 are furin-like endopeptidase recognition region; sequence RMRR. Positions 226–245 are helix H8 is the probable transmembrane region of the tetrameric pore inserted in the target cell membrane; sequence VLYALLYGTQTYVSVMFFLL. Cysteine 401 and cysteine 1054 are oxidised to a cystine. ANK repeat units follow at residues 446 to 477, 478 to 509, 513 to 542, 547 to 577, 581 to 610, 614 to 644, 648 to 678, 683 to 711, 717 to 746, 750 to 779, 783 to 812, 816 to 846, 850 to 879, 883 to 912, 916 to 945, 959 to 991, 992 to 1019, 1023 to 1052, 1056 to 1085, 1089 to 1119, 1125 to 1154, and 1158 to 1187; these read LYNTANNPDSAVGFKEFTKLNYDGANIRATFE, QGRTVFHAAAKSGNSRIMIGLTFLVKSNELNQ, KGYTPIHVAADSGNAGIVNLLIQRGVSINS, FLQTPLHLAAQRGFVTTFQRLMESPEININE, DGFTPLHYAVRGGERILEAFINQIRIDLNA, KGLTPFHLAIIKDDWPVASTLLGSKKVDVNA, NNMTALHYAAILGYLETTKQLINLKEINADV, GLLSALHYAILYKHDDVASFLLRSSNVNV, GGITPLHLAVIQGRTQILSLMFDIGVNIEQ, EKYTPLHLAAMSKYPELIQILLDQGSNFEA, SGATPLHLATFKGKSKAALILLNNEVNWRD, NGQMPIHGAAMNGLLDVAQAIISIDATVLDI, NSDTPLNLAAQKSHIDVIKYFIDQGADINT, TGHAPLLAFSKKGNLDMVKYLFDKNANVYI, DGINFFYYAVRNGHLNIVKYAMSEKDKFEW, EECAISHFAVCDAVQFDKIEIVKYFVTTLGNFA, ICGPLHQAARYGHLDIEKYLVEEEDLNV, KPDTPLCYASENGHLAVVQYLVSNGAKVNH, NGMTAIDKAITKNHLQVVQFLAANGVDFRR, LGATPFLTAVSENAFDIAEYLIRENRQDIDI, DKETALHLAVYYKNLQMIKLLVKYGIDMTI, and YDKTALDIATDLKNSNIVEYLKTKSGKFRR. Residues 1184-1187 are furin-like endopeptidase recognition region; that stretch reads KFRR. A propeptide spanning residues 1188 to 1351 is cleaved from the precursor; the sequence is EYKSSYGEHS…LGSVIMNSHS (164 aa).

The protein belongs to the cationic peptide 01 (latrotoxin) family. 03 (alpha-latrotoxin) subfamily. In terms of assembly, homotetramer in membranes. In terms of processing, processed by furin-like proteases at both the N- and C-termini. Expressed in venom gland, cephalothorax, and abdomen tissues from both males and females.

Its subcellular location is the secreted. It is found in the target cell membrane. Functionally, presynaptic neurotoxin that causes massive release of neurotransmitters from vertebrate (but not invertebrate) nerve terminals and endocrine cells via a complex mechanism involving activation of receptor(s) and toxin insertion into the plasma membrane with subsequent pore formation. Binds to neurexin-1-alpha (NRXN1) in a calcium dependent manner, adhesion G protein-coupled receptor L1 (ADGRL1, also termed latrophilin-1 and calcium-independent receptor of latrotoxin (CIRL)), and receptor-type tyrosine-protein phosphatase S (PTPRS), also termed PTP sigma. NRXN1 and PTPRS are suggested to provide a platform for binding and subsequent pore formation events. In contrast, binding to ADGRL1 does not involve oligomerization and channel formation, but direct downstream stimulation of the synaptic fusion machinery. Induces rapid muscle contracture and loss of twitch tension when added to the isolated and indirectly stimulated chick biventer cervicis nerve-muscle preparation. This Latrodectus hasselti (Redback spider) protein is Alpha-latrotoxin-Lh1a.